Reading from the N-terminus, the 215-residue chain is Nucleoredoxin-like protein 1 (215 aa).

The 164-residue stretch at 1 to 164 (MVDLFLGKVL…GAELIDRNFM (164 aa)) folds into the Thioredoxin; atypical domain. The tract at residues 190-215 (DEKKKKKKRDDDDDDDDGGGGGGPWG) is disordered.

This sequence belongs to the nucleoredoxin family.

It is found in the cell projection. Its subcellular location is the cilium. It localises to the photoreceptor outer segment. Functionally, plays an important role in retinal cone photoreceptor survival. May play a role in cone cell viability, slowing down cone degeneration, does not seem to play a role in degenerating rods. This Danio rerio (Zebrafish) protein is Nucleoredoxin-like protein 1 (nxnl1).